The chain runs to 201 residues: 3-isopropylmalate dehydratase small subunit (201 aa).

It belongs to the LeuD family. LeuD type 1 subfamily. In terms of assembly, heterodimer of LeuC and LeuD.

The enzyme catalyses (2R,3S)-3-isopropylmalate = (2S)-2-isopropylmalate. It functions in the pathway amino-acid biosynthesis; L-leucine biosynthesis; L-leucine from 3-methyl-2-oxobutanoate: step 2/4. Functionally, catalyzes the isomerization between 2-isopropylmalate and 3-isopropylmalate, via the formation of 2-isopropylmaleate. This is 3-isopropylmalate dehydratase small subunit from Shewanella putrefaciens (strain CN-32 / ATCC BAA-453).